We begin with the raw amino-acid sequence, 326 residues long: Phospho-N-acetylmuramoyl-pentapeptide-transferase (326 aa).

Transmembrane regions (helical) follow at residues 3–23, 51–71, 79–99, 115–135, 138–158, 169–189, 195–215, 221–243, and 306–326; these read ISISAGIVTFLLTLVGIPAFI, TMGGLVFLIASVLVAFFFALF, VGMILFILVLYGLIGFLDDFL, LALQLLGGVIFYLFYERGGDI, VFGYPVHLGFFYIFFALFWLV, GVDGLASISVVISLSAYGVIA, MDILLVILAMIGGLLGFFIFN, VFMGDVGSLALGGMLAAISMALH, and FFFWGVGLLASLLTLAILYLM.

The protein belongs to the glycosyltransferase 4 family. MraY subfamily. Mg(2+) serves as cofactor.

Its subcellular location is the cell membrane. The enzyme catalyses UDP-N-acetyl-alpha-D-muramoyl-L-alanyl-gamma-D-glutamyl-L-lysyl-D-alanyl-D-alanine + di-trans,octa-cis-undecaprenyl phosphate = Mur2Ac(oyl-L-Ala-gamma-D-Glu-L-Lys-D-Ala-D-Ala)-di-trans,octa-cis-undecaprenyl diphosphate + UMP. The protein operates within cell wall biogenesis; peptidoglycan biosynthesis. In terms of biological role, catalyzes the initial step of the lipid cycle reactions in the biosynthesis of the cell wall peptidoglycan: transfers peptidoglycan precursor phospho-MurNAc-pentapeptide from UDP-MurNAc-pentapeptide onto the lipid carrier undecaprenyl phosphate, yielding undecaprenyl-pyrophosphoryl-MurNAc-pentapeptide, known as lipid I. This is Phospho-N-acetylmuramoyl-pentapeptide-transferase from Streptococcus pneumoniae serotype 19F (strain G54).